The sequence spans 397 residues: Succinyl-diaminopimelate desuccinylase (397 aa).

Position 73 (H73) interacts with Zn(2+). Residue D75 is part of the active site. Position 106 (D106) interacts with Zn(2+). E140 (proton acceptor) is an active-site residue. E141, E169, and H366 together coordinate Zn(2+).

Belongs to the peptidase M20A family. DapE subfamily. Homodimer. Zn(2+) is required as a cofactor. It depends on Co(2+) as a cofactor.

The catalysed reaction is N-succinyl-(2S,6S)-2,6-diaminopimelate + H2O = (2S,6S)-2,6-diaminopimelate + succinate. Its pathway is amino-acid biosynthesis; L-lysine biosynthesis via DAP pathway; LL-2,6-diaminopimelate from (S)-tetrahydrodipicolinate (succinylase route): step 3/3. Functionally, catalyzes the hydrolysis of N-succinyl-L,L-diaminopimelic acid (SDAP), forming succinate and LL-2,6-diaminopimelate (DAP), an intermediate involved in the bacterial biosynthesis of lysine and meso-diaminopimelic acid, an essential component of bacterial cell walls. The protein is Succinyl-diaminopimelate desuccinylase of Sinorhizobium medicae (strain WSM419) (Ensifer medicae).